The chain runs to 469 residues: DNA (cytosine-5-)-methyltransferase M.ApeKI (469 aa).

The SAM-dependent MTase C5-type domain occupies 4–469; sequence YSTISLFSGA…EALAEVLDAV (466 aa). Residue Cys-93 is part of the active site.

This sequence belongs to the class I-like SAM-binding methyltransferase superfamily. C5-methyltransferase family.

The enzyme catalyses a 2'-deoxycytidine in DNA + S-adenosyl-L-methionine = a 5-methyl-2'-deoxycytidine in DNA + S-adenosyl-L-homocysteine + H(+). Its function is as follows. Cytosine methylase that recognizes the double-stranded sequence 5'-GC(A/T)GC-3', methylates C-5 position of the second cytosine on both strands, and protects the DNA from cleavage by the ApeKI endonuclease. This chain is DNA (cytosine-5-)-methyltransferase M.ApeKI, found in Aeropyrum pernix (strain ATCC 700893 / DSM 11879 / JCM 9820 / NBRC 100138 / K1).